A 316-amino-acid chain; its full sequence is N-acetylmuramic acid 6-phosphate etherase (316 aa).

One can recognise an SIS domain in the interval 66-229; that stretch reads IVAAIGRGGR…STASMIRLGK (164 aa). Residue glutamate 94 is the Proton donor of the active site. Glutamate 125 is an active-site residue.

It belongs to the GCKR-like family. MurNAc-6-P etherase subfamily. Homodimer.

The catalysed reaction is N-acetyl-D-muramate 6-phosphate + H2O = N-acetyl-D-glucosamine 6-phosphate + (R)-lactate. It functions in the pathway amino-sugar metabolism; 1,6-anhydro-N-acetylmuramate degradation. The protein operates within amino-sugar metabolism; N-acetylmuramate degradation. Its pathway is cell wall biogenesis; peptidoglycan recycling. Its function is as follows. Specifically catalyzes the cleavage of the D-lactyl ether substituent of MurNAc 6-phosphate, producing GlcNAc 6-phosphate and D-lactate. Together with AnmK, is also required for the utilization of anhydro-N-acetylmuramic acid (anhMurNAc) either imported from the medium or derived from its own cell wall murein, and thus plays a role in cell wall recycling. The chain is N-acetylmuramic acid 6-phosphate etherase from Jannaschia sp. (strain CCS1).